The chain runs to 297 residues: MEPAAGAQGPHQHEPISFGIDQILSGPEQDGAPPPPPPPPPPPPPPPPPPRGPDGAAFLGGPRGGAPYPALPGPFPAIAAPFEESGPYGVNLSLAPGGVIRVPAHRPIPGAVPPPVPSAIPAVPGLGGLSFPWMESSRRFVKERFTAAAALTPFTVTRRIGHPYQNRTPPKRKKPRTSFSRVQICELEKRFHRQKYLASAERAALAKSLKMTDAQVKTWFQNRRTKWRRQTAEEREAERQQASRLMLQLQHDAFQKSLNESIQPDPLCLHNSSLFALQNLQPWEEESAKIPPVTSLV.

Residues 1–68 (MEPAAGAQGP…LGGPRGGAPY (68 aa)) form a disordered region. A compositionally biased stretch (pro residues) spans 32–52 (APPPPPPPPPPPPPPPPPPRG). The homeobox DNA-binding region spans 172 to 231 (RKKPRTSFSRVQICELEKRFHRQKYLASAERAALAKSLKMTDAQVKTWFQNRRTKWRRQT).

Expression is restricted to neurons in the peripheral and central nervous system.

The protein localises to the nucleus. In terms of biological role, seems to be involved in the development of cranial sensory innervation from peripheral ganglia. This is T-cell leukemia homeobox protein 3 (TLX3) from Gallus gallus (Chicken).